Reading from the N-terminus, the 604-residue chain is Protein TAX4 (604 aa).

Disordered regions lie at residues 38–77, 132–249, 267–299, 338–380, and 394–428; these read HPNG…PRSI, SFSN…RQQE, GTLP…QQEN, DETF…KGLK, and PFPH…NEDK. Positions 176 to 185 are enriched in polar residues; that stretch reads YDNNVRSRSI. Low complexity-rich tracts occupy residues 186 to 203 and 224 to 240; these read SPQV…SISS and SMSS…KASL. 3 stretches are compositionally biased toward basic residues: residues 276 to 290, 366 to 379, and 396 to 421; these read SQRK…HRLL, KKKK…KKGL, and PHHH…HTSS. The region spanning 469–559 is the EH domain; that stretch reads ANEDDESHLQ…RVWNSVDGYV (91 aa).

It belongs to the IRS4 family. In terms of assembly, interacts with INP51.

Functionally, with IRS4, acts as a positive regulator of INP51 activity and phosphatidylinositol 4,5-bisphosphate turnover. Negatively regulates signaling through the cell integrity pathway, including the MAP kinase SLT2. This Saccharomyces cerevisiae (strain ATCC 204508 / S288c) (Baker's yeast) protein is Protein TAX4 (TAX4).